Reading from the N-terminus, the 1588-residue chain is Paternally-expressed gene 3 protein (1588 aa).

The 83-residue stretch at 46 to 128 (HQRFRNLIYV…TLLENYKEMY (83 aa)) folds into the SCAN box domain. Disordered stretches follow at residues 128 to 231 (YQPE…YQNV), 265 to 304 (GHSH…RRGI), and 317 to 347 (KFIK…MSDD). Over residues 129–142 (QPEDDNNSDVTSDD) the composition is skewed to acidic residues. 4 stretches are compositionally biased toward basic and acidic residues: residues 143-152 (DMTRNRRESS), 160-181 (FSDR…DRWS), 205-224 (FEMD…RSQD), and 293-304 (PEAKKSTHRRGI). 3 consecutive C2H2-type zinc fingers follow at residues 452 to 474 (YVCD…QIMH), 505 to 527 (FECK…RKIH), and 563 to 585 (YECR…QKIH). Residues 588 to 607 (DDKDNEREHERERERERGET) show a composition bias toward basic and acidic residues. Residues 588 to 608 (DDKDNEREHERERERERGETF) form a disordered region. The C2H2-type 4 zinc finger occupies 627-649 (YECKVCGETFLHSSSLKEHQKIH). Disordered stretches follow at residues 839–889 (VASK…SKNR) and 905–929 (QKSV…SSNV). Over residues 868–881 (LNDKRQKIPARENP) the composition is skewed to basic and acidic residues. Residues 969-991 (YECQECGECFAHSSDLTEHQKIH) form a C2H2-type 5 zinc finger. The tract at residues 1056–1104 (EKSHGEESQGENTDGEETHSEETHGQETIEDPVIQGSDMEDPQKDDPDD) is disordered. The segment covering 1071 to 1082 (EETHSEETHGQE) has biased composition (basic and acidic residues). 5 consecutive C2H2-type zinc fingers follow at residues 1107 to 1129 (YECE…QKVH), 1163 to 1185 (YECP…QRIH), 1225 to 1247 (IRCL…MRLH), 1282 to 1304 (FECA…VTVH), and 1332 to 1354 (YECK…KELH). Positions 1396–1415 (EPEVEAAEPEVEAAEPEVEA) are enriched in acidic residues. A disordered region spans residues 1396–1495 (EPEVEAAEPE…GIEDPEEGED (100 aa)). 7 consecutive repeat copies span residues 1397–1403 (PEVEAAE), 1404–1410 (PEVEAAE), 1411–1417 (PEVEAAE), 1418–1422 (PNGEA), 1425–1429 (PDGEA), 1432–1436 (PIGEA), and 1439–1443 (PNGEA). Residues 1397–1417 (PEVEAAEPEVEAAEPEVEAAE) form a 3 X 7 AA repeat of P-E-V-E-A-A-E region. Positions 1418-1443 (PNGEAEGPDGEAAEPIGEAGQPNGEA) are 4 X 5 AA repeat of P-X-G-E-A. 2 stretches are compositionally biased toward acidic residues: residues 1449-1466 (DADE…ERAE) and 1475-1495 (PEGD…EGED). 2 consecutive C2H2-type zinc fingers follow at residues 1505–1527 (YDCH…LKTH) and 1564–1586 (FKCD…QNTH).

The protein belongs to the krueppel C2H2-type zinc-finger protein family. Homodimer. Interacts with SIAH1A and SIAH2. Interacts with TRAF2. In terms of tissue distribution, brain, glial cells, astrocytes, embryo, placenta, testis, ovary and uterus. In the placenta it is found in the layer of villous cytotrophoblast cells while in the ovary it is found in the cells of the ovarian stroma including the thecal layers around the follicles. Expression is highly repressed in glioma cell lines.

The protein resides in the nucleus. It localises to the cytoplasm. Induces apoptosis in cooperation with SIAH1A. Acts as a mediator between p53/TP53 and BAX in a neuronal death pathway that is activated by DNA damage. Acts synergistically with TRAF2 and inhibits TNF induced apoptosis through activation of NF-kappa-B. Possesses a tumor suppressing activity in glioma cells. This Homo sapiens (Human) protein is Paternally-expressed gene 3 protein (PEG3).